The chain runs to 53 residues: UPF0391 membrane protein GFO_1615 (53 aa).

2 helical membrane passes run 4-24 and 27-47; these read LIVI…GGVA and AADI…ISVL.

It belongs to the UPF0391 family.

The protein localises to the cell membrane. This chain is UPF0391 membrane protein GFO_1615, found in Christiangramia forsetii (strain DSM 17595 / CGMCC 1.15422 / KT0803) (Gramella forsetii).